Reading from the N-terminus, the 380-residue chain is Queuine tRNA-ribosyltransferase (380 aa).

The active-site Proton acceptor is Asp-93. Residues 93 to 97, Asp-147, Gln-198, and Gly-225 each bind substrate; that span reads DSGGF. Residues 256–262 are RNA binding; the sequence is GVGLPSN. Asp-275 serves as the catalytic Nucleophile. Positions 280–284 are RNA binding; important for wobble base 34 recognition; it reads ARNGR. The Zn(2+) site is built by Cys-313, Cys-315, Cys-318, and His-344.

The protein belongs to the queuine tRNA-ribosyltransferase family. Homodimer. Within each dimer, one monomer is responsible for RNA recognition and catalysis, while the other monomer binds to the replacement base PreQ1. Zn(2+) serves as cofactor.

The catalysed reaction is 7-aminomethyl-7-carbaguanine + guanosine(34) in tRNA = 7-aminomethyl-7-carbaguanosine(34) in tRNA + guanine. The protein operates within tRNA modification; tRNA-queuosine biosynthesis. In terms of biological role, catalyzes the base-exchange of a guanine (G) residue with the queuine precursor 7-aminomethyl-7-deazaguanine (PreQ1) at position 34 (anticodon wobble position) in tRNAs with GU(N) anticodons (tRNA-Asp, -Asn, -His and -Tyr). Catalysis occurs through a double-displacement mechanism. The nucleophile active site attacks the C1' of nucleotide 34 to detach the guanine base from the RNA, forming a covalent enzyme-RNA intermediate. The proton acceptor active site deprotonates the incoming PreQ1, allowing a nucleophilic attack on the C1' of the ribose to form the product. After dissociation, two additional enzymatic reactions on the tRNA convert PreQ1 to queuine (Q), resulting in the hypermodified nucleoside queuosine (7-(((4,5-cis-dihydroxy-2-cyclopenten-1-yl)amino)methyl)-7-deazaguanosine). The sequence is that of Queuine tRNA-ribosyltransferase from Clostridium perfringens (strain ATCC 13124 / DSM 756 / JCM 1290 / NCIMB 6125 / NCTC 8237 / Type A).